The primary structure comprises 464 residues: Meiotic plaque component protein 54 (464 aa).

Residues 71–102 (SISTTITPNKSSLKSPRGKRASKNSFDNETKL) are disordered. Coiled coils occupy residues 99 to 119 (ETKLESKNETLKEVNDAVNRC), 156 to 193 (KAECERSKNAIDSLYYHEQLEKKELNEKSLQMAIDHLL), and 231 to 365 (SINS…LQTQ).

In terms of assembly, interacts directly with SPO21/MPC70, NUD1, SPO74 and SPC42. Probable component of a spindle pole body (SPB) complex composed of ADY3, SSP1, DON1, MPC54, SPO21/MPC70, NUD1 and CNM67.

Its subcellular location is the prospore membrane. The protein localises to the cytoplasm. It localises to the cytoskeleton. The protein resides in the microtubule organizing center. It is found in the spindle pole body. Its subcellular location is the spindle pole. Functionally, involved in the pathway that organizes the shaping and sizing of the prospore membrane (PSM) during sporulation. The polypeptide is Meiotic plaque component protein 54 (MPC54) (Saccharomyces cerevisiae (strain ATCC 204508 / S288c) (Baker's yeast)).